We begin with the raw amino-acid sequence, 556 residues long: MQFKKHKNSVKFKRKLFWTIGVLGAGALTTFSAVMITNLVNQSGYALVASGRSGNLGFKLFSTQSPSAEVKLKSLSLNDGSYQSEIDLSGGANFREKFRNFANELSEAITNSPKGLDRPVPKTEISGLIKTGDNFITPSFKAGYYDHVASDGSLLSYYQSTEYFNNRVLMPILQTTNGTLMANNRGYDDVFRQVPSFSGWSNTKATTVSTSNNLTYDKWTYFAAKGSPLYDSYPNHFFEDVKTLAIDAKDISALKTTIDSEKPTYLIIRGLSGNGSQLNELQLPESVKKVSLYGDYTGVNVAKQIFANVVELEFYSTSKANSFGFNPLVLGSKTNVIYDLFASKPFTHIDLTQVTLQNSDNSAIDANKLKQAVGDIYNYRRFERQFQGYFAGGYIDKYLVKNVNTNKDSDDDLVYRSLKELNLHLEEAYREGDNTYYRVNENYYPGASIYENERASRDSEFQNEILKRAEQNGVTFDENIKRITASGKYSVQFQKLENDTDSSLERMTKAVEGLVTVIGEEKFETVDITGVSSDTNEVKSLAKELKTNALGVKLKL.

A helical transmembrane segment spans residues 16–36; sequence LFWTIGVLGAGALTTFSAVMI.

Its subcellular location is the membrane. This is an uncharacterized protein from Mycoplasma genitalium (strain ATCC 33530 / DSM 19775 / NCTC 10195 / G37) (Mycoplasmoides genitalium).